We begin with the raw amino-acid sequence, 393 residues long: NAD(P)H-quinone oxidoreductase subunit H, chloroplastic (393 aa).

It belongs to the complex I 49 kDa subunit family. In terms of assembly, NDH is composed of at least 16 different subunits, 5 of which are encoded in the nucleus.

The protein localises to the plastid. It localises to the chloroplast thylakoid membrane. It carries out the reaction a plastoquinone + NADH + (n+1) H(+)(in) = a plastoquinol + NAD(+) + n H(+)(out). The enzyme catalyses a plastoquinone + NADPH + (n+1) H(+)(in) = a plastoquinol + NADP(+) + n H(+)(out). NDH shuttles electrons from NAD(P)H:plastoquinone, via FMN and iron-sulfur (Fe-S) centers, to quinones in the photosynthetic chain and possibly in a chloroplast respiratory chain. The immediate electron acceptor for the enzyme in this species is believed to be plastoquinone. Couples the redox reaction to proton translocation, and thus conserves the redox energy in a proton gradient. This chain is NAD(P)H-quinone oxidoreductase subunit H, chloroplastic, found in Ceratophyllum demersum (Rigid hornwort).